A 257-amino-acid chain; its full sequence is Undecaprenyl-diphosphatase (257 aa).

Transmembrane regions (helical) follow at residues 4–24 (LFKAIILGIIQGITEFLPISS), 51–71 (HVGTLISLLYCFWKDWINIFF), 78–98 (LFIIIGTIPAGIAGIAFHDLI), 106–126 (LIIVVTLILVGFLMLYAEKVG), 133–153 (ITLSDAVVIGTAQAIALIPGV), 171–191 (AYAAKFSFLLSTPAIAGAAML), 207–227 (LFIIGVISAAITGIIAIKFLL), and 235–255 (LNLFIYYRWFLAVVIFLLYFF).

It belongs to the UppP family.

The protein localises to the cell inner membrane. It catalyses the reaction di-trans,octa-cis-undecaprenyl diphosphate + H2O = di-trans,octa-cis-undecaprenyl phosphate + phosphate + H(+). In terms of biological role, catalyzes the dephosphorylation of undecaprenyl diphosphate (UPP). Confers resistance to bacitracin. The polypeptide is Undecaprenyl-diphosphatase (Thermodesulfovibrio yellowstonii (strain ATCC 51303 / DSM 11347 / YP87)).